The chain runs to 75 residues: DNA-directed RNA polymerase subunit Rpo6 (75 aa).

The protein belongs to the archaeal Rpo6/eukaryotic RPB6 RNA polymerase subunit family. Part of the RNA polymerase complex.

It localises to the cytoplasm. It carries out the reaction RNA(n) + a ribonucleoside 5'-triphosphate = RNA(n+1) + diphosphate. In terms of biological role, DNA-dependent RNA polymerase (RNAP) catalyzes the transcription of DNA into RNA using the four ribonucleoside triphosphates as substrates. This Archaeoglobus fulgidus (strain ATCC 49558 / DSM 4304 / JCM 9628 / NBRC 100126 / VC-16) protein is DNA-directed RNA polymerase subunit Rpo6.